Here is a 385-residue protein sequence, read N- to C-terminus: Benzoylsuccinyl-CoA thiolase subunit BbsB (385 aa).

CoA is bound at residue Arg19. Cys84 functions as the Acyl-thioester intermediate in the catalytic mechanism. CoA is bound by residues Gly121, Arg193, Cys204, and Cys205.

This sequence belongs to the thiolase-like superfamily. Thiolase family. As to quaternary structure, heterotetramer composed of two BbsA subunits and two BbsB subunits. BbsB forms homodimeric subcomplexes. Both BbsA and BbsB are essential for enzymatic activity.

It catalyses the reaction (S)-2-benzoylsuccinyl-CoA + CoA = benzoyl-CoA + succinyl-CoA. The protein operates within xenobiotic degradation; toluene degradation. Its function is as follows. Component of the BbsAB thiolase complex, which catalyzes the thiolytic cleavage of (S)-2-benzoylsuccinyl-CoA to succinyl-CoA and benzoyl-CoA, the final step of anaerobic toluene metabolism. The protein is Benzoylsuccinyl-CoA thiolase subunit BbsB of Thauera aromatica.